The chain runs to 431 residues: MAKTRTKKNANKRVVKGTLDQKHTEKINKFENMSKALPKKKEKLKKHEAQLEELMSLNPNKFTHENIRRKSYLMDSIKNLKEEINSIENCSESLDYIVNTLPILVNYYDNGDIVDDDKEELISEAMADGKKNILSYFFKETSQQENSSESNNDIVKNGTGGSTSKRKKIQPSNRCSGSKTGKVTETKPRLSRAKLYDNYLNVTDPHYRKSVKKSQNVCSVPDCDGEKILNQNDGYMVCKKCGFSEPILLTTDKPNYKEPTQDSGTYAYKRINHLTEILSQLQAKESTDIPNKVYEAIKRELKKRKIDKNDLDIFRLRRILKKLNYRKFYEHVPHILQVINGKEPPNFSRADEMKIKALFKSIQKPFAIYCPKNRKNFLNYSYVLHKFCELLELDEYTNYFPLLKNNAKLLQHDKIWKNICDYQGWYFYKSL.

Positions 28–95 (NKFENMSKAL…SIENCSESLD (68 aa)) form a coiled coil. The segment at 142 to 187 (SQQENSSESNNDIVKNGTGGSTSKRKKIQPSNRCSGSKTGKVTETK) is disordered. Over residues 143-152 (QQENSSESNN) the composition is skewed to low complexity. Positions 170–181 (QPSNRCSGSKTG) are enriched in polar residues. A zinc finger spans residues 218-241 (CSVPDCDGEKILNQNDGYMVCKKC).

Belongs to the nucleo-cytoplasmic large DNA viruses (NCLDVs) VLTF-3 family.

In terms of biological role, putative transcription factor. The polypeptide is Putative transcription factor R429 (Acanthamoeba polyphaga (Amoeba)).